The chain runs to 145 residues: Phospholipase A2, membrane associated (145 aa).

The N-terminal stretch at 1 to 20 (MKLLLLLLVVMASDLPQAHG) is a signal peptide. Intrachain disulfides connect Cys46-Cys138, Cys48-Cys64, Cys63-Cys118, Cys69-Cys145, Cys70-Cys111, Cys79-Cys104, and Cys97-Cys109. Ca(2+)-binding residues include His47, Gly49, and Gly51. The active site involves His67. A Ca(2+)-binding site is contributed by Asp68. Asp112 is a catalytic residue.

The protein belongs to the phospholipase A2 family. The cofactor is Ca(2+). As to expression, alveolar macrophages, and at much lower levels in peripheral blood monocytes and peritoneal macrophages.

The protein resides in the secreted. Its subcellular location is the cell membrane. The protein localises to the mitochondrion outer membrane. It carries out the reaction a 1,2-diacyl-sn-glycero-3-phosphoethanolamine + H2O = a 1-acyl-sn-glycero-3-phosphoethanolamine + a fatty acid + H(+). It catalyses the reaction 1-hexadecanoyl-2-(9Z-octadecenoyl)-sn-glycero-3-phosphoethanolamine + H2O = 1-hexadecanoyl-sn-glycero-3-phosphoethanolamine + (9Z)-octadecenoate + H(+). The catalysed reaction is 1-hexadecanoyl-2-(9Z,12Z-octadecadienoyl)-sn-glycero-3-phosphoethanolamine + H2O = 1-hexadecanoyl-sn-glycero-3-phosphoethanolamine + (9Z,12Z)-octadecadienoate + H(+). The enzyme catalyses 1-hexadecanoyl-2-(5Z,8Z,11Z,14Z-eicosatetraenoyl)-sn-glycero-3-phosphoethanolamine + H2O = 1-hexadecanoyl-sn-glycero-3-phosphoethanolamine + (5Z,8Z,11Z,14Z)-eicosatetraenoate + H(+). It carries out the reaction N-hexadecanoyl-1,2-di-(9Z-octadecenoyl)-sn-glycero-3-phosphoethanolamine + H2O = N-hexadecanoyl-1-(9Z-octadecenoyl)-sn-glycero-3-phosphoethanolamine + (9Z)-octadecenoate + H(+). It catalyses the reaction 1,2-dihexadecanoyl-sn-glycero-3-phospho-(1'-sn-glycerol) + H2O = 1-hexadecanoyl-sn-glycero-3-phospho-(1'-sn-glycerol) + hexadecanoate + H(+). The catalysed reaction is 1-hexadecanoyl-2-(9Z-octadecenoyl)-sn-glycero-3-phosphoglycerol + H2O = 1-hexadecanoyl-sn-glycero-3-phosphoglycerol + (9Z)-octadecenoate + H(+). The enzyme catalyses 1-hexadecanoyl-2-(9Z-octadecenoyl)-sn-glycero-3-phospho-(1'-sn-glycerol) + H2O = 1-hexadecanoyl-sn-glycero-3-phospho-(1'-sn-glycerol) + (9Z)-octadecenoate + H(+). It carries out the reaction a 1,2-diacyl-sn-glycero-3-phosphocholine + H2O = a 1-acyl-sn-glycero-3-phosphocholine + a fatty acid + H(+). It catalyses the reaction 1,2-dihexadecanoyl-sn-glycero-3-phosphocholine + H2O = 1-hexadecanoyl-sn-glycero-3-phosphocholine + hexadecanoate + H(+). The catalysed reaction is 1-hexadecanoyl-2-(9Z-octadecenoyl)-sn-glycero-3-phosphocholine + H2O = 1-hexadecanoyl-sn-glycero-3-phosphocholine + (9Z)-octadecenoate + H(+). The enzyme catalyses 1-hexadecanoyl-2-(9Z,12Z-octadecadienoyl)-sn-glycero-3-phosphocholine + H2O = (9Z,12Z)-octadecadienoate + 1-hexadecanoyl-sn-glycero-3-phosphocholine + H(+). It carries out the reaction 1-hexadecanoyl-2-(4Z,7Z,10Z,13Z,16Z,19Z-docosahexaenoyl)-sn-glycero-3-phosphocholine + H2O = (4Z,7Z,10Z,13Z,16Z,19Z)-docosahexaenoate + 1-hexadecanoyl-sn-glycero-3-phosphocholine + H(+). Its function is as follows. Secretory calcium-dependent phospholipase A2 that primarily targets extracellular phospholipids with implications in host antimicrobial defense, inflammatory response and tissue regeneration. Hydrolyzes the ester bond of the fatty acyl group attached at sn-2 position of phospholipids (phospholipase A2 activity) with preference for phosphatidylethanolamines and phosphatidylglycerols over phosphatidylcholines. Contributes to lipid remodeling of cellular membranes and generation of lipid mediators involved in pathogen clearance. Displays bactericidal activity against Gram-positive bacteria by directly hydrolyzing phospholipids of the bacterial membrane. Upon sterile inflammation, targets membrane phospholipids of extracellular mitochondria released from activated platelets, generating free unsaturated fatty acids such as arachidonate that is used by neighboring leukocytes to synthesize inflammatory eicosanoids such as leukotrienes. Simultaneously, by compromising mitochondrial membrane integrity, promotes the release in circulation of potent damage-associated molecular pattern molecules that activate the innate immune response. Plays a stem cell regulator role in the intestinal crypt. Within intracellular compartment mediates Paneth cell differentiation and its stem cell supporting functions by inhibiting Wnt signaling pathway in intestinal stem cell (ICS). Secreted in the intestinal lumen upon inflammation, acts in an autocrine way and promotes prostaglandin E2 synthesis that stimulates Wnt signaling pathway in ICS cells and tissue regeneration. May play a role in the biosynthesis of N-acyl ethanolamines that regulate energy metabolism and inflammation. Hydrolyzes N-acyl phosphatidylethanolamines to N-acyl lysophosphatidylethanolamines, which are further cleaved by a lysophospholipase D to release N-acyl ethanolamines. Independent of its catalytic activity, acts as a ligand for integrins. Binds to and activates integrins ITGAV:ITGB3, ITGA4:ITGB1 and ITGA5:ITGB1. Binds to a site (site 2) which is distinct from the classical ligand-binding site (site 1) and induces integrin conformational changes and enhanced ligand binding to site 1. Induces cell proliferation in an integrin-dependent manner. The polypeptide is Phospholipase A2, membrane associated (PLA2G2A) (Cavia porcellus (Guinea pig)).